A 324-amino-acid polypeptide reads, in one-letter code: MIVRSQIIGCGSYLPSRLVTNAELAAQVDTSDEWIVERSGIRQRHIAAEGETTSDLATNAALRALEAAGISGSAVDLVIVATATPDNTFPATATKVQSRIGMRHGFAFDVQAVCSGFVYALSVADNFIKSGQVQTALVIGAETFSRILDWTDRTTCVLFGDGAGAVVLRASRGKGSSADRGILSTHLHSDGSHYDLLYVDGGPSSTQTVGHVHMEGREVFRHAVINLAAVVGEALAANDLKASDIDWVVPHQANRRIIEGTAKKLGFPLDKMVMTVERHANTSAASIPLALTEAVGDGRIKPGQLVLLEAMGGGFTWGSALVRM.

Catalysis depends on residues C114 and H251. Positions 252-256 are ACP-binding; that stretch reads QANRR. Residue N281 is part of the active site.

Belongs to the thiolase-like superfamily. FabH family. In terms of assembly, homodimer.

The protein resides in the cytoplasm. The enzyme catalyses malonyl-[ACP] + acetyl-CoA + H(+) = 3-oxobutanoyl-[ACP] + CO2 + CoA. It participates in lipid metabolism; fatty acid biosynthesis. Functionally, catalyzes the condensation reaction of fatty acid synthesis by the addition to an acyl acceptor of two carbons from malonyl-ACP. Catalyzes the first condensation reaction which initiates fatty acid synthesis and may therefore play a role in governing the total rate of fatty acid production. Possesses both acetoacetyl-ACP synthase and acetyl transacylase activities. Its substrate specificity determines the biosynthesis of branched-chain and/or straight-chain of fatty acids. This chain is Beta-ketoacyl-[acyl-carrier-protein] synthase III, found in Paramagnetospirillum magneticum (strain ATCC 700264 / AMB-1) (Magnetospirillum magneticum).